Consider the following 429-residue polypeptide: Serine--tRNA ligase (429 aa).

Position 236-238 (236-238) interacts with L-serine; that stretch reads TAE. Residue 267 to 269 participates in ATP binding; that stretch reads RSE. E290 contributes to the L-serine binding site. 354–357 lines the ATP pocket; that stretch reads EVSS. S390 is a binding site for L-serine.

The protein belongs to the class-II aminoacyl-tRNA synthetase family. Type-1 seryl-tRNA synthetase subfamily. In terms of assembly, homodimer. The tRNA molecule binds across the dimer.

The protein resides in the cytoplasm. The catalysed reaction is tRNA(Ser) + L-serine + ATP = L-seryl-tRNA(Ser) + AMP + diphosphate + H(+). The enzyme catalyses tRNA(Sec) + L-serine + ATP = L-seryl-tRNA(Sec) + AMP + diphosphate + H(+). It participates in aminoacyl-tRNA biosynthesis; selenocysteinyl-tRNA(Sec) biosynthesis; L-seryl-tRNA(Sec) from L-serine and tRNA(Sec): step 1/1. In terms of biological role, catalyzes the attachment of serine to tRNA(Ser). Is also able to aminoacylate tRNA(Sec) with serine, to form the misacylated tRNA L-seryl-tRNA(Sec), which will be further converted into selenocysteinyl-tRNA(Sec). This chain is Serine--tRNA ligase, found in Wigglesworthia glossinidia brevipalpis.